The sequence spans 189 residues: GTPase HRas (189 aa).

An N-acetylmethionine modification is found at M1. An N-acetylthreonine; in GTPase HRas, N-terminally processed modification is found at T2. 10 to 17 (GAGGVGKS) provides a ligand contact to GTP. The Effector region motif lies at 32–40 (YDPTIEDSY). GTP is bound by residues 57–61 (DTAGQ) and 116–119 (NKCD). The residue at position 118 (C118) is an S-nitrosocysteine. Residues 166 to 185 (HKLRKLNPPDESGPGCMNCK) form a hypervariable region region. S-palmitoyl cysteine attachment occurs at residues C181 and C184. Residue C186 is modified to Cysteine methyl ester. C186 carries the S-farnesyl cysteine lipid modification. A propeptide spans 187–189 (VIS) (removed in mature form).

This sequence belongs to the small GTPase superfamily. Ras family. Post-translationally, palmitoylated by the ZDHHC9-GOLGA7 complex. A continuous cycle of de- and re-palmitoylation regulates rapid exchange between plasma membrane and Golgi.

The protein resides in the cell membrane. The protein localises to the golgi apparatus membrane. The catalysed reaction is GTP + H2O = GDP + phosphate + H(+). Alternates between an inactive form bound to GDP and an active form bound to GTP. Activated by a guanine nucleotide-exchange factor (GEF) and inactivated by a GTPase-activating protein (GAP). Ras proteins bind GDP/GTP and possess intrinsic GTPase activity. This Gallus gallus (Chicken) protein is GTPase HRas (HRAS).